A 264-amino-acid chain; its full sequence is Proteasome assembly chaperone 2 (264 aa).

T137 is modified (phosphothreonine).

Belongs to the PSMG2 family. In terms of assembly, forms a heterodimer with PSMG1. The PSMG1-PSMG2 heterodimer interacts directly with the PSMA5 and PSMA7 proteasome alpha subunits. Degraded by the proteasome upon completion of 20S proteasome maturation.

The protein localises to the nucleus. Its function is as follows. Chaperone protein which promotes assembly of the 20S proteasome as part of a heterodimer with PSMG1. The PSMG1-PSMG2 heterodimer binds to the PSMA5 and PSMA7 proteasome subunits, promotes assembly of the proteasome alpha subunits into the heteroheptameric alpha ring and prevents alpha ring dimerization. The chain is Proteasome assembly chaperone 2 from Bos taurus (Bovine).